The following is a 435-amino-acid chain: Histidine--tRNA ligase (435 aa).

The protein belongs to the class-II aminoacyl-tRNA synthetase family. As to quaternary structure, homodimer.

The protein resides in the cytoplasm. It catalyses the reaction tRNA(His) + L-histidine + ATP = L-histidyl-tRNA(His) + AMP + diphosphate + H(+). The sequence is that of Histidine--tRNA ligase from Synechococcus sp. (strain ATCC 27144 / PCC 6301 / SAUG 1402/1) (Anacystis nidulans).